Consider the following 396-residue polypeptide: MAKAKFERNKPHCNIGTIGHVDHGKTSLTAAITKVLAEAGGATFTAYDQIDKAPEEKARGITISTSHVEYETPNRHYAHVDCPGHADYVKNMITGAAQMDGAILVVSAADGPMPQTREHILLARQVGVPAIVVFLNKCDMVDDPELLELVEMEVRELLSKYDFPGDDIPIIKGSALAVLENSDPKLGHDAVLELMKAVDAYIPQPERPVDQPFLMPVEDVFSISGRGTVVTGRVERGIVKVGEEIEIVGIRPTQKTTVTGVEMFRKLLDQGQAGDNIGALLRGTKREDVERGQVLCKPGSVKPHTKFKAEAYILTKEEGGRHTPFFTNYRPQFYFRTTDVTGVVHLPAGTEMVMPGDNVAMEVHLIVPIAMEEKLRFAIREGGRTVGAGVVASIIE.

Residues 10 to 206 (KPHCNIGTIG…AVDAYIPQPE (197 aa)) form the tr-type G domain. The G1 stretch occupies residues 19 to 26 (GHVDHGKT). 19-26 (GHVDHGKT) contacts GTP. Thr26 serves as a coordination point for Mg(2+). The interval 60–64 (GITIS) is G2. The segment at 81–84 (DCPG) is G3. Residues 81–85 (DCPGH) and 136–139 (NKCD) each bind GTP. Residues 136–139 (NKCD) form a G4 region. Positions 174–176 (SAL) are G5.

The protein belongs to the TRAFAC class translation factor GTPase superfamily. Classic translation factor GTPase family. EF-Tu/EF-1A subfamily. As to quaternary structure, monomer.

Its subcellular location is the cytoplasm. It carries out the reaction GTP + H2O = GDP + phosphate + H(+). Its function is as follows. GTP hydrolase that promotes the GTP-dependent binding of aminoacyl-tRNA to the A-site of ribosomes during protein biosynthesis. The polypeptide is Elongation factor Tu (Nitrobacter hamburgensis (strain DSM 10229 / NCIMB 13809 / X14)).